The sequence spans 549 residues: Leiomodin-2 (549 aa).

Residues 1–42 (MSTFGYRRGLSKYESIDEDELLASLTAEELKELERELEDIEP) form a tropomyosin-binding region. Residues 1 to 47 (MSTFGYRRGLSKYESIDEDELLASLTAEELKELERELEDIEPDRNLP) are interaction with tropomyosin alpha. Interaction with actin stretches follow at residues 1–164 (MSTF…PDNS), 165–499 (KPKT…KEIK), and 523–542 (AHENLMEAIRGSSIRQLRRV). Ser-11, Ser-15, and Ser-24 each carry phosphoserine. Disordered regions lie at residues 91–166 (KLAE…NSKP), 179–200 (TNGNSGGTQRNTESPAAIHPCG), 358–455 (MDKQ…PGKK), and 469–534 (ESAQ…IRGS). Acidic residues-rich tracts occupy residues 95-105 (EDKEESEEELI) and 113-143 (VSEEVCTEEEEESTEEEEEEEEEDSEEEEVT). Composition is skewed to polar residues over residues 150 to 163 (INGTVSHNGVNPDN) and 179 to 192 (TNGNSGGTQRNTES). The segment covering 358 to 376 (MDKQRQKRMQEQKQQEGHD) has biased composition (basic and acidic residues). A compositionally biased stretch (polar residues) spans 390 to 401 (TPGSSPYASPRQ). Ser-406 bears the Phosphoserine mark. The segment covering 420–452 (PPSPVAPPPPPPPPPLPPHMLPPPPPPPAPPLP) has biased composition (pro residues). A coiled-coil region spans residues 457–515 (ITRNIAEVIKQQESAQRALQNGQRKKKGKKVKKQPNNILKEIKNSLRSVQEKKMEESSR). Over residues 469-478 (ESAQRALQNG) the composition is skewed to polar residues. The segment covering 479-489 (QRKKKGKKVKK) has biased composition (basic residues). Over residues 496-514 (KEIKNSLRSVQEKKMEESS) the composition is skewed to basic and acidic residues. Residues 523–542 (AHENLMEAIRGSSIRQLRRV) form the WH2 domain.

It belongs to the tropomodulin family. Can bind at least three actin monomers and thereby provides a nucleus for actin filament formation. Interacts (via N-terminus) with tropomyosin alpha (TPM1) (via N-terminus). May also interact with TPM2 (via N-terminus). Interacts with FLII.

Its subcellular location is the cytoplasm. The protein localises to the myofibril. The protein resides in the sarcomere. It is found in the m line. It localises to the cytoskeleton. In terms of biological role, mediates nucleation of actin filaments and thereby promotes actin polymerization. Plays a role in the regulation of actin filament length. Required for normal sarcomere organization in the heart, and for normal heart function. In Rattus norvegicus (Rat), this protein is Leiomodin-2 (Lmod2).